Consider the following 121-residue polypeptide: Protein VraC (121 aa).

The protein is Protein VraC (vraC) of Staphylococcus aureus (strain Mu3 / ATCC 700698).